We begin with the raw amino-acid sequence, 106 residues long: Nucleoid-associated protein Nwi_0368 (106 aa).

The protein belongs to the YbaB/EbfC family. Homodimer.

The protein localises to the cytoplasm. It localises to the nucleoid. Functionally, binds to DNA and alters its conformation. May be involved in regulation of gene expression, nucleoid organization and DNA protection. This chain is Nucleoid-associated protein Nwi_0368, found in Nitrobacter winogradskyi (strain ATCC 25391 / DSM 10237 / CIP 104748 / NCIMB 11846 / Nb-255).